Consider the following 180-residue polypeptide: Large ribosomal subunit protein uL6 (180 aa).

It belongs to the universal ribosomal protein uL6 family. Part of the 50S ribosomal subunit.

Functionally, this protein binds to the 23S rRNA, and is important in its secondary structure. It is located near the subunit interface in the base of the L7/L12 stalk, and near the tRNA binding site of the peptidyltransferase center. In Clostridioides difficile (strain 630) (Peptoclostridium difficile), this protein is Large ribosomal subunit protein uL6.